A 377-amino-acid polypeptide reads, in one-letter code: Leukocyte elastase inhibitor (377 aa).

Position 1 is an N-acetylmethionine (Met-1). Lys-136 carries the post-translational modification N6-acetyllysine. Ser-298 carries the post-translational modification Phosphoserine. The CARD-binding motif (CBM) stretch occupies residues 349 to 377 (EFVADHPFIFFIRHKPSSNILFLGRLSSP).

Belongs to the serpin family. Ov-serpin subfamily. As to quaternary structure, monomer. Interacts (via C-terminus) with CASP1; CASP4 (via CARD domain) and CASP5; these interactions regulate the activity of inflammatory caspases. Interacts with PRTN3. Interacts with GZMH.

It localises to the secreted. The protein resides in the cytoplasm. Its subcellular location is the cytolytic granule. It is found in the early endosome. Neutrophil serine protease inhibitor that plays an essential role in the regulation of the innate immune response, inflammation and cellular homeostasis. Acts primarily to protect the cell from proteases released in the cytoplasm during stress or infection. These proteases are important in killing microbes but when released from granules, these potent enzymes also destroy host proteins and contribute to mortality. Regulates the activity of the neutrophil proteases elastase, cathepsin G, proteinase-3, chymase, chymotrypsin, and kallikrein-3. Also acts as a potent intracellular inhibitor of GZMH by directly blocking its proteolytic activity. During inflammation, limits the activity of inflammatory caspases CASP1, CASP4 and CASP5 by suppressing their caspase-recruitment domain (CARD) oligomerization and enzymatic activation. When secreted, promotes the proliferation of beta-cells via its protease inhibitory function. This is Leukocyte elastase inhibitor (SERPINB1) from Bos taurus (Bovine).